A 346-amino-acid polypeptide reads, in one-letter code: Uroporphyrinogen decarboxylase (346 aa).

Substrate is bound by residues 21 to 25 (RQAGR), F40, D71, Y146, S201, and H316.

Belongs to the uroporphyrinogen decarboxylase family. In terms of assembly, homodimer.

The protein localises to the cytoplasm. It carries out the reaction uroporphyrinogen III + 4 H(+) = coproporphyrinogen III + 4 CO2. The protein operates within porphyrin-containing compound metabolism; protoporphyrin-IX biosynthesis; coproporphyrinogen-III from 5-aminolevulinate: step 4/4. Functionally, catalyzes the decarboxylation of four acetate groups of uroporphyrinogen-III to yield coproporphyrinogen-III. This chain is Uroporphyrinogen decarboxylase, found in Rickettsia conorii (strain ATCC VR-613 / Malish 7).